A 146-amino-acid polypeptide reads, in one-letter code: D-aminoacyl-tRNA deacylase (146 aa).

Positions glycine 137 to proline 138 match the Gly-cisPro motif, important for rejection of L-amino acids motif.

Belongs to the DTD family. Homodimer.

The protein resides in the cytoplasm. The enzyme catalyses glycyl-tRNA(Ala) + H2O = tRNA(Ala) + glycine + H(+). It carries out the reaction a D-aminoacyl-tRNA + H2O = a tRNA + a D-alpha-amino acid + H(+). An aminoacyl-tRNA editing enzyme that deacylates mischarged D-aminoacyl-tRNAs. Also deacylates mischarged glycyl-tRNA(Ala), protecting cells against glycine mischarging by AlaRS. Acts via tRNA-based rather than protein-based catalysis; rejects L-amino acids rather than detecting D-amino acids in the active site. By recycling D-aminoacyl-tRNA to D-amino acids and free tRNA molecules, this enzyme counteracts the toxicity associated with the formation of D-aminoacyl-tRNA entities in vivo and helps enforce protein L-homochirality. The sequence is that of D-aminoacyl-tRNA deacylase from Acinetobacter baylyi (strain ATCC 33305 / BD413 / ADP1).